The chain runs to 143 residues: Large ribosomal subunit protein uL13 (143 aa).

The protein belongs to the universal ribosomal protein uL13 family. Part of the 50S ribosomal subunit.

In terms of biological role, this protein is one of the early assembly proteins of the 50S ribosomal subunit, although it is not seen to bind rRNA by itself. It is important during the early stages of 50S assembly. In Chloroflexus aggregans (strain MD-66 / DSM 9485), this protein is Large ribosomal subunit protein uL13.